A 96-amino-acid chain; its full sequence is Large ribosomal subunit protein eL21 (96 aa).

Residues 1-66 (MPSSNGPLEG…FDGQTGTVEG (66 aa)) form a disordered region.

The protein belongs to the eukaryotic ribosomal protein eL21 family. In terms of assembly, part of the 50S ribosomal subunit. Interacts with protein L18 and binds the 5S rRNA. Has been cross-linked to L18.

Its function is as follows. This is one of 5 proteins that mediate the attachment of the 5S rRNA onto the large ribosomal subunit, stabilizing the orientation of adjacent RNA domains. The polypeptide is Large ribosomal subunit protein eL21 (rpl21e) (Haloarcula marismortui (strain ATCC 43049 / DSM 3752 / JCM 8966 / VKM B-1809) (Halobacterium marismortui)).